The primary structure comprises 538 residues: Cytochrome P450 monooxygenase claO (538 aa).

The next 2 membrane-spanning stretches (helical) occupy residues Ile7 to Gly27 and Ile222 to Leu242. Cys475 contributes to the heme binding site.

The protein belongs to the cytochrome P450 family. The cofactor is heme.

It localises to the membrane. It participates in secondary metabolite biosynthesis; terpenoid biosynthesis. Its function is as follows. Cytochrome P450 monooxygenase; part of the gene cluster that mediates the biosynthesis of clavilactone A, a meroterpenoid that features a unique benzo-fused ten-membered carbocyclic ring unit with an alpha,beta-epoxy-gamma-lactone moiety, forming an intriguing 10/5/3 tricyclic nested skeleton. Cytochrome P450 monooxygenases claO, claP, claQ, claU, and claW are close orthologs, suggesting that a redundant function or pseudogenes are present in the cla cluster. These monoxygenases are not involved in clavilactone A biosynthesis nor in its modification. ClaR, ClaS and ClaT are sufficient to produce clavilactone A. The biosynthesis begins with the prenyltransferase claS that transfers geranyl pyrophosphate (GPP) to hydroquinone to produces geranylhydroquinone. The cytochrome P450 monooxygenase claR then catalyzes the diradical coupling reaction between the intramolecular hydroquinone and allyl moieties to form the benzo-fused ten-membered carbocyclic ring unit of wigantol. Finally the cytochrome P450 monooxygenase claT exquisitely and stereoselectively assembles the alpha,beta-epoxy-gamma-lactone moiety, producing clavilactone A via arnebinol A. This is Cytochrome P450 monooxygenase claO from Ampulloclitocybe clavipes (Club foot).